We begin with the raw amino-acid sequence, 1216 residues long: Metabotropic glycine receptor (1216 aa).

Positions 1–23 are cleaved as a signal peptide; the sequence is MGVMAYPFLFCLLLVHFGLGAIG. The Extracellular segment spans residues 24–417; the sequence is ASREAPSRPD…CFVQEDKYLR (394 aa). The interval 25–65 is disordered; sequence SREAPSRPDPPRERTLRAKQHAQQPARASASDPSAPWSRST. Over residues 28–40 the composition is skewed to basic and acidic residues; sequence APSRPDPPRERTL. Low complexity predominate over residues 46–64; the sequence is AQQPARASASDPSAPWSRS. Residues 85 to 281 form a cache-like region region; the sequence is YLYTGDSHKL…CENGSYKPGW (197 aa). Residues asparagine 98 and asparagine 143 are each glycosylated (N-linked (GlcNAc...) asparagine). Cysteine 99 and cysteine 272 form a disulfide bridge. Glycine-binding residues include serine 172 and arginine 173. N-linked (GlcNAc...) asparagine glycosylation is present at asparagine 215. Glutamate 271 is a glycine binding site. N-linked (GlcNAc...) asparagine glycosylation is present at asparagine 274. Position 307 (aspartate 307) interacts with glycine. N-linked (GlcNAc...) asparagine glycosylation is present at asparagine 333. Residues 418–439 traverse the membrane as a helical segment; it reads LAIISFQALCMLLDFLSMLVVY. Residues 440–451 are Cytoplasmic-facing; the sequence is RFRKAKSIRASG. The chain crosses the membrane as a helical span at residues 452 to 474; sequence LILLETILFGSLLLYFPVVILYF. Residues 475 to 478 lie on the Extracellular side of the membrane; sequence EPST. A helical transmembrane segment spans residues 479-501; it reads FRCILLRWVRLLGFATVYGTVTL. A disulfide bond links cysteine 481 and cysteine 573. Topologically, residues 502-525 are cytoplasmic; the sequence is KLHRVLKVFLSRTAQRIPYMTGGR. A helical transmembrane segment spans residues 526–547; it reads VMRMLAVILLVVFWFLVGWTSS. Over 548 to 576 the chain is Extracellular; sequence VCQNLERHISLIGQGRTSDHLIFSMCLVE. The helical transmembrane segment at 577–597 threads the bilayer; it reads RWDYMTAAAEFLFLLWGVYLC. Topologically, residues 598 to 611 are cytoplasmic; that stretch reads YAVRTVPSAFHEPR. A helical membrane pass occupies residues 612–633; that stretch reads YMAVAVHNELIISAIFHTIRFV. Over 634 to 642 the chain is Extracellular; it reads LASRLQSDW. A helical membrane pass occupies residues 643–664; it reads MLMLYFAHTHLTVTVTIGLLLI. Residues 665-1216 lie on the Cytoplasmic side of the membrane; it reads PKFSHSSNNP…NEEVRLARKV (552 aa). Phosphoserine is present on residues serine 694, serine 705, and serine 708. Disordered stretches follow at residues 757-875 and 911-1000; these read RITE…ESVP and KEKT…HMKD. Over residues 769–781 the composition is skewed to basic and acidic residues; sequence CSKEDKDGGEHGS. Lysine 774 is covalently cross-linked (Glycyl lysine isopeptide (Lys-Gly) (interchain with G-Cter in ubiquitin)). Over residues 864 to 873 the composition is skewed to polar residues; the sequence is EDSQAVSTES. At serine 866 the chain carries Phosphoserine. The span at 926–944 shows a compositional bias: basic and acidic residues; it reads VEERAKAQKALPRERETNR. Composition is skewed to polar residues over residues 945-963 and 980-991; these read KYSNSDNAETQDSAPPNSS and QRANPTTANSDL. Serine 947 carries the post-translational modification Phosphoserine. The VCPWE motif 1 motif lies at 1007–1011; sequence VCPWE. The segment at 1038–1072 is disordered; sequence ERNPTFSLKEKSHPKPKAADLCQQSNPKSVDKAEV. Serine 1066 is modified (phosphoserine). The short motif at 1072 to 1076 is the VCPWE motif 2 element; it reads VCPWE. At serine 1081 the chain carries Phosphoserine. The disordered stretch occupies residues 1128–1167; it reads SKVENENLNQLGEQEKKTSSSERNVPDSHNSSNNFQPPLM. Basic and acidic residues predominate over residues 1140–1153; sequence EQEKKTSSSERNVP. Residues 1154-1163 show a composition bias toward polar residues; the sequence is DSHNSSNNFQ. The VCPWE motif 3 motif lies at 1172–1176; it reads VCPWE.

It belongs to the G-protein coupled receptor 3 family. Homodimer. Associates with the RGS7-GNB5 complex, promoting its localization to the cell membrane and regulating its GTPase activator activity. Interacts (via VCPWE motifs) with GNAO1. Interacts with GPC4. Interacts with EGFLAM.

The protein localises to the cell membrane. The protein resides in the postsynaptic cell membrane. It is found in the presynaptic cell membrane. Its subcellular location is the nucleus. Its function is as follows. Metabotropic receptor for glycine that controls synapse formation and function in the brain. Acts as an atypical G-protein coupled receptor that recruits and regulates the RGS7-GNB5 complex instead of activating G proteins. In absence of glycine ligand, promotes the GTPase activator activity of RGS7, increasing the GTPase activity of G protein alpha subunits, thereby driving them into their inactive GDP-bound form. Glycine-binding changes the conformation of the intracellular surface, inhibiting the GTPase activator activity of the RGS7-GNB5 complex, promoting G protein alpha subunits into their active GTP-bound form and regulating cAMP levels. Also able to bind taurine, a compound closely related to glycine, but with a two-fold lower affinity. Glycine receptor-dependent regulation of cAMP controls key ion channels, kinases and neurotrophic factors involved in neuronal excitability and synaptic transmission. Plays a pivotal role in regulating mood and cognition via its ability to regulate neuronal excitability in L2/L3 pyramidal neurons of the prefrontal cortex. Also involved in spatial learning by regulating hippocampal CA1 neuronal excitability. Acts as a synaptic organizer in the hippocampus, required for proper mossy fiber-CA3 neurocircuitry establishment, structure and function: induces presynaptic differentiation in contacting axons via its interaction with GPC4. In addition to glycine, may also act as a receptor for osteocalcin (BGLAP) hormone: osteocalcin-binding initiates a signaling response that prevents neuronal apoptosis in the hippocampus and regulates the synthesis of neurotransmitters. In Bos taurus (Bovine), this protein is Metabotropic glycine receptor (GPR158).